A 410-amino-acid chain; its full sequence is Acyl-CoA-binding domain-containing protein 5-B (410 aa).

Residues 12–101 (AQKRFEAAVK…IQLIIETLPV (90 aa)) form the ACB domain. Residues 23 to 32 (IRSLPEDGSY), 43 to 47 (YSYYK), Lys-69, and Tyr-88 contribute to the an acyl-CoA site. Positions 119–128 (VEDDDDDDDE) are enriched in acidic residues. Disordered stretches follow at residues 119-165 (VEDD…LDDY), 221-242 (SDDE…GSGV), and 254-320 (GANM…DRMD). A coiled-coil region spans residues 326 to 355 (TQITTILSELEDNMQDVLRRLTTLEQLTAS). Positions 382-404 (SPFTAVLTVLWPFAVHWLVQFYL) form a transmembrane segment.

It is found in the membrane. Functionally, binds medium- and long-chain acyl-CoA esters. The polypeptide is Acyl-CoA-binding domain-containing protein 5-B (acbd5b) (Danio rerio (Zebrafish)).